Consider the following 86-residue polypeptide: Small ribosomal subunit protein bS18c (86 aa).

This sequence belongs to the bacterial ribosomal protein bS18 family. In terms of assembly, part of the 30S ribosomal subunit.

Its subcellular location is the plastid. It is found in the chloroplast. This Larix laricina (Tamarack) protein is Small ribosomal subunit protein bS18c.